Reading from the N-terminus, the 204-residue chain is Probable nicotinate-nucleotide adenylyltransferase (204 aa).

It belongs to the NadD family.

The catalysed reaction is nicotinate beta-D-ribonucleotide + ATP + H(+) = deamido-NAD(+) + diphosphate. Its pathway is cofactor biosynthesis; NAD(+) biosynthesis; deamido-NAD(+) from nicotinate D-ribonucleotide: step 1/1. Catalyzes the reversible adenylation of nicotinate mononucleotide (NaMN) to nicotinic acid adenine dinucleotide (NaAD). This Dehalococcoides mccartyi (strain ATCC BAA-2100 / JCM 16839 / KCTC 5957 / BAV1) protein is Probable nicotinate-nucleotide adenylyltransferase.